The following is a 523-amino-acid chain: Nuclear receptor ROR-alpha (523 aa).

The span at 1–26 shows a compositional bias: low complexity; that stretch reads MESAPAAPDPAASEPGSSGADAAAGS. Residues 1 to 63 are disordered; it reads MESAPAAPDP…SRGISVTKKT (63 aa). The residue at position 38 (K38) is an N6-methyllysine. Residues 48-57 show a composition bias toward polar residues; it reads QSYSSTSRGI. 2 NR C4-type zinc fingers span residues 73-93 and 109-133; these read CKIC…CEGC and CPRQ…LQKC. Residues 73–138 constitute a DNA-binding region (nuclear receptor); the sequence is CKICGDKSSG…RLQKCLAVGM (66 aa). The interval 154-183 is disordered; it reads DSLYAEVQKHRMQQQQRDHQQQPGEAEPLT. T183 carries the post-translational modification Phosphothreonine; by MAPK1. Residue K240 forms a Glycyl lysine isopeptide (Lys-Gly) (interchain with G-Cter in SUMO) linkage. Residues 272–510 enclose the NR LBD domain; sequence ELEHLAQNIS…LHFPPLYKEL (239 aa). The short motif at 506-523 is the AF-2 element; sequence LYKELFTSEFEPAMQIDG.

Belongs to the nuclear hormone receptor family. NR1 subfamily. As to quaternary structure, monomer. Interacts (via the DNA-binding domain) with HIF1A; the interaction enhances HIF1A transcription under hypoxia through increasing protein stability. Interacts with CEBPB; the interaction disrupts the interaction CEBPB:EP300. Interacts with the coactivators NCOA2, PPARGC1A (via LXXLL motif), EP300 and MED1. Interacts with the corepressor NCOR1. Interacts with MAGED1 and CTNNB1. Interacts with CRY1 and PER2. Interacts (via AF-2 motif) with PROX1. Interacts with NRIP1. Isoform 4 interacts (via AF-2 motif) with isoform 1 of FOXP3 (via LXXLL motif). Phosphorylation by conventional PKCs in neurons inhibits transcriptional activity. Phosphorylated on Thr-183 by MAPK1/ERK1 in vitro. In terms of processing, sumoylated by SENP1 and SENP2. Sumoylation, promoted by PIAS2, PIAS3, PIAS4 but not PIAS1, enhances the transcriptional activity. Desumoylated by SENP1. Post-translationally, ubiquitinated, leading to its degradation by the proteasome. Proteasomal degradation is required for efficient transcriptional activity and is prevented by HR. Monomethylated at Lys-38 by EZH2, this creates a degron recognized by a DCX (DDB1-DCAF1/VPRBP-CUL4A-RBX1) E3 ubiquitin ligase complex. As to expression, widely expressed in a number of tissues. Expressed in both regulatory T-cells (Treg) and effector T-cells (Teff). Isoform 4: Highly expressed in the central nervous system, including in the cerebellum.

The protein resides in the nucleus. Its function is as follows. Nuclear receptor that binds DNA as a monomer to ROR response elements (RORE) containing a single core motif half-site 5'-AGGTCA-3' preceded by a short A-T-rich sequence. Key regulator of embryonic development, cellular differentiation, immunity, circadian rhythm as well as lipid, steroid, xenobiotics and glucose metabolism. Considered to have intrinsic transcriptional activity, have some natural ligands like oxysterols that act as agonists (25-hydroxycholesterol) or inverse agonists (7-oxygenated sterols), enhancing or repressing the transcriptional activity, respectively. Recruits distinct combinations of cofactors to target genes regulatory regions to modulate their transcriptional expression, depending on the tissue, time and promoter contexts. Regulates genes involved in photoreceptor development including OPN1SW, OPN1SM and ARR3 and skeletal muscle development with MYOD1. Required for proper cerebellum development. Regulates SHH gene expression, among others, to induce granule cells proliferation as well as expression of genes involved in calcium-mediated signal transduction. Regulates the circadian expression of several clock genes, including CLOCK, BMAL1, NPAS2 and CRY1. Competes with NR1D1 for binding to their shared DNA response element on some clock genes such as BMAL1, CRY1 and NR1D1 itself, resulting in NR1D1-mediated repression or RORA-mediated activation of clock genes expression, leading to the circadian pattern of clock genes expression. Therefore influences the period length and stability of the clock. Regulates genes involved in lipid metabolism such as apolipoproteins APOA1, APOA5, APOC3 and PPARG. In liver, has specific and redundant functions with RORC as positive or negative modulator of expression of genes encoding phase I and phase II proteins involved in the metabolism of lipids, steroids and xenobiotics, such as CYP7B1 and SULT2A1. Induces a rhythmic expression of some of these genes. In addition, interplays functionally with NR1H2 and NR1H3 for the regulation of genes involved in cholesterol metabolism. Also involved in the regulation of hepatic glucose metabolism through the modulation of G6PC1 and PCK1. In adipose tissue, plays a role as negative regulator of adipocyte differentiation, probably acting through dual mechanisms. May suppress CEBPB-dependent adipogenesis through direct interaction and PPARG-dependent adipogenesis through competition for DNA-binding. Downstream of IL6 and TGFB and synergistically with RORC isoform 2, is implicated in the lineage specification of uncommitted CD4(+) T-helper (T(H)) cells into T(H)17 cells, antagonizing the T(H)1 program. Probably regulates IL17 and IL17F expression on T(H) by binding to the essential enhancer conserved non-coding sequence 2 (CNS2) in the IL17-IL17F locus. Involved in hypoxia signaling by interacting with and activating the transcriptional activity of HIF1A. May inhibit cell growth in response to cellular stress. May exert an anti-inflammatory role by inducing CHUK expression and inhibiting NF-kappa-B signaling. The chain is Nuclear receptor ROR-alpha (RORA) from Homo sapiens (Human).